A 653-amino-acid chain; its full sequence is NADH-ubiquinone oxidoreductase chain 5 (653 aa).

The next 16 membrane-spanning stretches (helical) occupy residues 1–21 (MYLV…FFGR), 30–50 (LITS…FFEV), 81–103 (LTVS…SIGY), 120–140 (FTFM…FLGV), 177–197 (FLTI…YSTV), 200–220 (LAPY…LIGA), 241–261 (TPVS…YLLM), 274–294 (LILC…IGLF), 301–319 (VIAY…AIGL), 331–351 (NHAF…HSVS), 365–385 (FLPL…AIPF), 403–423 (FYIS…FTTL), 452–472 (IFIN…GYLT), 511–531 (LLPL…SEFF), 610–630 (GVIT…VFLL), and 631–651 (YLNI…STIN).

This sequence belongs to the complex I subunit 5 family.

The protein localises to the mitochondrion inner membrane. It catalyses the reaction a ubiquinone + NADH + 5 H(+)(in) = a ubiquinol + NAD(+) + 4 H(+)(out). Functionally, core subunit of the mitochondrial membrane respiratory chain NADH dehydrogenase (Complex I) that is believed to belong to the minimal assembly required for catalysis. Complex I functions in the transfer of electrons from NADH to the respiratory chain. The immediate electron acceptor for the enzyme is believed to be ubiquinone. This is NADH-ubiquinone oxidoreductase chain 5 (ND5) from Trichophyton rubrum (Athlete's foot fungus).